Reading from the N-terminus, the 311-residue chain is Methionyl-tRNA formyltransferase (311 aa).

Position 110-113 (110-113 (SLLP)) interacts with (6S)-5,6,7,8-tetrahydrofolate.

The protein belongs to the Fmt family.

The catalysed reaction is L-methionyl-tRNA(fMet) + (6R)-10-formyltetrahydrofolate = N-formyl-L-methionyl-tRNA(fMet) + (6S)-5,6,7,8-tetrahydrofolate + H(+). Attaches a formyl group to the free amino group of methionyl-tRNA(fMet). The formyl group appears to play a dual role in the initiator identity of N-formylmethionyl-tRNA by promoting its recognition by IF2 and preventing the misappropriation of this tRNA by the elongation apparatus. This chain is Methionyl-tRNA formyltransferase, found in Streptococcus uberis (strain ATCC BAA-854 / 0140J).